The chain runs to 366 residues: A-type ATP synthase subunit C (366 aa).

The protein belongs to the V-ATPase V0D/AC39 subunit family. As to quaternary structure, has multiple subunits with at least A(3), B(3), C, D, E, F, H, I and proteolipid K(x).

It localises to the cell membrane. Component of the A-type ATP synthase that produces ATP from ADP in the presence of a proton gradient across the membrane. This chain is A-type ATP synthase subunit C, found in Thermococcus gammatolerans (strain DSM 15229 / JCM 11827 / EJ3).